Consider the following 172-residue polypeptide: Fimbrial-like protein FimF (172 aa).

An N-terminal signal peptide occupies residues 1 to 21 (MILRRVFIAIGCVLFSPLSQA). Cys-41 and Cys-81 form a disulfide bridge.

The protein belongs to the fimbrial protein family.

It localises to the fimbrium. The polypeptide is Fimbrial-like protein FimF (fimF) (Salmonella typhimurium (strain LT2 / SGSC1412 / ATCC 700720)).